A 445-amino-acid chain; its full sequence is Trigger factor (445 aa).

The PPIase FKBP-type domain maps to 172–257 (GDQVVINFVG…VKSVNWAHLP (86 aa)).

This sequence belongs to the FKBP-type PPIase family. Tig subfamily.

The protein resides in the cytoplasm. It carries out the reaction [protein]-peptidylproline (omega=180) = [protein]-peptidylproline (omega=0). In terms of biological role, involved in protein export. Acts as a chaperone by maintaining the newly synthesized protein in an open conformation. Functions as a peptidyl-prolyl cis-trans isomerase. In Polynucleobacter necessarius subsp. necessarius (strain STIR1), this protein is Trigger factor.